Here is a 353-residue protein sequence, read N- to C-terminus: S-adenosylmethionine:tRNA ribosyltransferase-isomerase (353 aa).

It belongs to the QueA family. Monomer.

The protein localises to the cytoplasm. It catalyses the reaction 7-aminomethyl-7-carbaguanosine(34) in tRNA + S-adenosyl-L-methionine = epoxyqueuosine(34) in tRNA + adenine + L-methionine + 2 H(+). Its pathway is tRNA modification; tRNA-queuosine biosynthesis. In terms of biological role, transfers and isomerizes the ribose moiety from AdoMet to the 7-aminomethyl group of 7-deazaguanine (preQ1-tRNA) to give epoxyqueuosine (oQ-tRNA). This is S-adenosylmethionine:tRNA ribosyltransferase-isomerase from Burkholderia vietnamiensis (strain G4 / LMG 22486) (Burkholderia cepacia (strain R1808)).